Reading from the N-terminus, the 591-residue chain is L-fucose isomerase (591 aa).

Catalysis depends on proton acceptor residues E337 and D361. Mn(2+) contacts are provided by E337, D361, and H528.

This sequence belongs to the L-fucose isomerase family. As to quaternary structure, homohexamer. Mn(2+) serves as cofactor.

Its subcellular location is the cytoplasm. The catalysed reaction is L-fucose = L-fuculose. It functions in the pathway carbohydrate degradation; L-fucose degradation; L-lactaldehyde and glycerone phosphate from L-fucose: step 1/3. Converts the aldose L-fucose into the corresponding ketose L-fuculose. The chain is L-fucose isomerase from Escherichia coli (strain UTI89 / UPEC).